The primary structure comprises 647 residues: 1-deoxy-D-xylulose-5-phosphate synthase (647 aa).

Residues His-74 and 115-117 contribute to the thiamine diphosphate site; that span reads GHS. Residue Asp-146 participates in Mg(2+) binding. Thiamine diphosphate-binding positions include 147–148, Asn-175, Tyr-286, and Glu-367; that span reads GA. Mg(2+) is bound at residue Asn-175.

It belongs to the transketolase family. DXPS subfamily. In terms of assembly, homodimer. The cofactor is Mg(2+). Thiamine diphosphate serves as cofactor.

It catalyses the reaction D-glyceraldehyde 3-phosphate + pyruvate + H(+) = 1-deoxy-D-xylulose 5-phosphate + CO2. It participates in metabolic intermediate biosynthesis; 1-deoxy-D-xylulose 5-phosphate biosynthesis; 1-deoxy-D-xylulose 5-phosphate from D-glyceraldehyde 3-phosphate and pyruvate: step 1/1. Functionally, catalyzes the acyloin condensation reaction between C atoms 2 and 3 of pyruvate and glyceraldehyde 3-phosphate to yield 1-deoxy-D-xylulose-5-phosphate (DXP). The polypeptide is 1-deoxy-D-xylulose-5-phosphate synthase (Heliobacterium modesticaldum (strain ATCC 51547 / Ice1)).